The following is a 376-amino-acid chain: WW domain-binding protein 4 (376 aa).

Residues 11–42 (KFCDYCKCWIADNRPSVEFHERGKNHKENVAK) form a Matrin-type zinc finger. Positions 94-107 (ITPVTSTIPPTSTS) are enriched in low complexity. Disordered stretches follow at residues 94–128 (ITPVTSTIPPTSTSNQQKEKKEKKKRKKDPSKGRW), 189–335 (SRWE…EPKV), and 356–376 (FKKRRTENGKSRNLRQRGDDQ). WW domains lie at 122 to 155 (DPSKGRWVEGITSEGYHYYYDLISGASQWEKPEG) and 163 to 196 (TAVKTVWVEGLSEDGFTYYYNTETGESRWEKPDD). The segment covering 189-198 (SRWEKPDDFI) has biased composition (basic and acidic residues). Positions 203–215 (DLPSSKVNENSLG) are enriched in polar residues. 2 stretches are compositionally biased toward basic and acidic residues: residues 218 to 229 (DESKSSDSHSDS) and 243 to 257 (ETEKPKIKFKEKNKN). Residues serine 220, serine 227, and serine 229 each carry the phosphoserine modification. A Phosphoserine modification is found at serine 262. Residues 298-309 (QEIKQEVESHEE) show a composition bias toward basic and acidic residues. A compositionally biased stretch (polar residues) spans 316-326 (STENEYVSTSE). An interaction with SNRNP200 region spans residues 357–375 (KKRRTENGKSRNLRQRGDD). The span at 361–376 (TENGKSRNLRQRGDDQ) shows a compositional bias: basic and acidic residues.

Component of the spliceosome B complex. Associated with U2 snRNPs. Binds splicing factors SNRPB, SNRPC and SF1. Interacts via the WW domains with the Pro-rich domains of KHDRBS1/SAM68. Interacts via the WW domains with the Pro-rich domains of WBP11. Interacts with SNRNP200.

Its subcellular location is the nucleus. It localises to the nucleus speckle. Functionally, involved in pre-mRNA splicing as a component of the spliceosome. May play a role in cross-intron bridging of U1 and U2 snRNPs in the mammalian A complex. In Homo sapiens (Human), this protein is WW domain-binding protein 4 (WBP4).